The following is a 296-amino-acid chain: Ribosomal protein L11 methyltransferase (296 aa).

Residues Thr-145, Gly-166, Asp-188, and Asn-230 each coordinate S-adenosyl-L-methionine.

This sequence belongs to the methyltransferase superfamily. PrmA family.

Its subcellular location is the cytoplasm. The enzyme catalyses L-lysyl-[protein] + 3 S-adenosyl-L-methionine = N(6),N(6),N(6)-trimethyl-L-lysyl-[protein] + 3 S-adenosyl-L-homocysteine + 3 H(+). Its function is as follows. Methylates ribosomal protein L11. In Photorhabdus laumondii subsp. laumondii (strain DSM 15139 / CIP 105565 / TT01) (Photorhabdus luminescens subsp. laumondii), this protein is Ribosomal protein L11 methyltransferase.